The following is a 309-amino-acid chain: Glutaminase (309 aa).

Positions 65, 117, 162, 169, 193, 245, and 263 each coordinate substrate.

This sequence belongs to the glutaminase family. In terms of assembly, homotetramer.

The catalysed reaction is L-glutamine + H2O = L-glutamate + NH4(+). The sequence is that of Glutaminase from Geobacillus thermodenitrificans (strain NG80-2).